Consider the following 369-residue polypeptide: Somatostatin receptor type 2 (369 aa).

Residues 1 to 43 (MDMAYELLNGSQPWLSSPFDLNGSVATANSSNQTEPYYDLTSN) are Extracellular-facing. 4 N-linked (GlcNAc...) asparagine glycosylation sites follow: Asn-9, Asn-22, Asn-29, and Asn-32. Residues 44-67 (AVLTFIYFVVCIIGLCGNTLVIYV) traverse the membrane as a helical segment. At 68 to 78 (ILRYAKMKTIT) the chain is on the cytoplasmic side. The chain crosses the membrane as a helical span at residues 79–103 (NIYILNLAIADELFMLGLPFLAMQV). Residues 104 to 118 (ALVHWPFGKAICRVV) lie on the Extracellular side of the membrane. A disulfide bridge connects residues Cys-115 and Cys-193. Residues 119–138 (MTVDGINQFTSIFCLTVMSI) form a helical membrane-spanning segment. Topologically, residues 139-161 (DRYLAVVHPIKSAKWRRPRTAKM) are cytoplasmic. A helical transmembrane segment spans residues 162-181 (INVAVWGVSLLVILPIMIYA). Residues 182 to 207 (GLRSNQWGRSSCTINWPGESGAWYTG) are Extracellular-facing. A helical transmembrane segment spans residues 208 to 229 (FIIYAFILGFLVPLTIICLCYL). Over 230 to 253 (FIIIKVKSSGIRVGSSKRKKSEKK) the chain is Cytoplasmic. A helical membrane pass occupies residues 254–278 (VTRMVSIVVAVFIFCWLPFYIFNVS). Residues 279–288 (SVSVAISPTP) are Extracellular-facing. A helical membrane pass occupies residues 289–303 (ALKGMFDFVVVLTYA). Topologically, residues 304–369 (NSCANPILYA…LLNGDLQTSI (66 aa)) are cytoplasmic. Residue Cys-328 is the site of S-palmitoyl cysteine attachment. A phosphoserine mark is found at Ser-341, Ser-343, and Ser-348. 2 positions are modified to phosphothreonine: Thr-353 and Thr-354.

The protein belongs to the G-protein coupled receptor 1 family. Homodimer and heterodimer with SSTR3 and SSTR5. Heterodimerization with SSTR3 inactivates SSTR3 receptor function. Heterodimerization with SSTR5 is enhanced by agonist stimulation of SSTR2 and increases SSTR2 cell growth inhibition activity. Following agonist stimulation, homodimers dissociate into monomers which is required for receptor internalization. Interacts with beta-arrestin; this interaction is necessary for receptor internalization and is destabilized by heterodimerization with SSTR5 which results in increased recycling of SSTR2 to the cell surface. Interacts (via C-terminus) with SHANK1 (via PDZ domain). Post-translationally, phosphorylated on serine and threonine residues in response to agonist stimulation, leading to receptor desensitization and rapid internalization. Phosphorylated to a greater extent on serine than threonine residues. Threonine phosphorylation is required for arrestin binding and receptor endocytosis but is not necessary for desensitization.

It is found in the cell membrane. The protein localises to the cytoplasm. Receptor for somatostatin-14 and -28. This receptor is coupled via pertussis toxin sensitive G proteins to inhibition of adenylyl cyclase. In addition it stimulates phosphotyrosine phosphatase and PLC via pertussis toxin insensitive as well as sensitive G proteins. Inhibits calcium entry by suppressing voltage-dependent calcium channels. Acts as the functionally dominant somatostatin receptor in pancreatic alpha- and beta-cells where it mediates the inhibitory effect of somatostatin-14 on hormone secretion. Inhibits cell growth through enhancement of MAPK1 and MAPK2 phosphorylation and subsequent up-regulation of CDKN1B. Stimulates neuronal migration and axon outgrowth and may participate in neuron development and maturation during brain development. Mediates negative regulation of insulin receptor signaling through PTPN6. Inactivates SSTR3 receptor function following heterodimerization. This chain is Somatostatin receptor type 2 (SSTR2), found in Sus scrofa (Pig).